A 130-amino-acid polypeptide reads, in one-letter code: Small ribosomal subunit protein uS8 (130 aa).

It belongs to the universal ribosomal protein uS8 family. As to quaternary structure, part of the 30S ribosomal subunit. Contacts proteins S5 and S12.

Its function is as follows. One of the primary rRNA binding proteins, it binds directly to 16S rRNA central domain where it helps coordinate assembly of the platform of the 30S subunit. The sequence is that of Small ribosomal subunit protein uS8 from Salmonella arizonae (strain ATCC BAA-731 / CDC346-86 / RSK2980).